Here is a 43-residue protein sequence, read N- to C-terminus: Protein PsbN (43 aa).

A helical transmembrane segment spans residues 7–27 (FVVGILVALVLITAFAVYTAF).

Belongs to the PsbN family.

Its subcellular location is the cell inner membrane. Its function is as follows. May play a role in photosystem I and II biogenesis. The sequence is that of Protein PsbN from Gloeobacter violaceus (strain ATCC 29082 / PCC 7421).